The chain runs to 60 residues: MNFNKLFALVLLIGLVLLTGQTEAGGLKKLGKKLEGVGKRVFKASEKALPVLTGYKAIGK.

The N-terminal stretch at 1–24 (MNFNKLFALVLLIGLVLLTGQTEA) is a signal peptide. Residue I58 is modified to Isoleucine amide.

Belongs to the cecropin family.

The protein resides in the secreted. Its function is as follows. Cecropins have lytic and antibacterial activity against several Gram-positive and Gram-negative bacteria. This Aedes albopictus (Asian tiger mosquito) protein is Cecropin-B type 1 (CECB1).